Reading from the N-terminus, the 110-residue chain is Large ribosomal subunit protein uL22 (110 aa).

It belongs to the universal ribosomal protein uL22 family. As to quaternary structure, part of the 50S ribosomal subunit.

This protein binds specifically to 23S rRNA; its binding is stimulated by other ribosomal proteins, e.g. L4, L17, and L20. It is important during the early stages of 50S assembly. It makes multiple contacts with different domains of the 23S rRNA in the assembled 50S subunit and ribosome. Its function is as follows. The globular domain of the protein is located near the polypeptide exit tunnel on the outside of the subunit, while an extended beta-hairpin is found that lines the wall of the exit tunnel in the center of the 70S ribosome. This chain is Large ribosomal subunit protein uL22, found in Mycoplasma mobile (strain ATCC 43663 / 163K / NCTC 11711) (Mesomycoplasma mobile).